The following is a 1222-amino-acid chain: BOS complex subunit NOMO3 (1222 aa).

An N-terminal signal peptide occupies residues 1–31 (MLVGQGAGPLGPAVVTAAVVLLLSGVGPAHG). Topologically, residues 32–1155 (SEDIVVGCGG…NPTRKLPEQD (1124 aa)) are extracellular. N-linked (GlcNAc...) asparagine glycosylation is found at asparagine 50, asparagine 218, and asparagine 618. Residues 1156 to 1176 (IAQGSYIALPLTLLVLLAGYN) form a helical membrane-spanning segment. Residues 1177–1222 (HDKLIPLLLQLTSRLQGVGALGQAASDNSGPEDAKRQAKKQKTRRT) lie on the Cytoplasmic side of the membrane. The segment at 1198 to 1222 (GQAASDNSGPEDAKRQAKKQKTRRT) is disordered. Residues 1213 to 1222 (QAKKQKTRRT) show a composition bias toward basic residues.

Component of the back of Sec61 (BOS) complex, composed of NCLN/Nicalin, NOMO (NOMO1, NOMO2 or NOMO3) and TMEM147. The BOS complex is part of the multi-pass translocon (MPT) complex, composed of three subcomplexes, the GEL complex (composed of RAB5IF/OPTI and TMCO1), the BOS complex (composed of NCLN/Nicalin, NOMO and TMEM147) and the PAT complex (composed of WDR83OS/Asterix and CCDC47). The MPT complex associates with the SEC61 complex. Due to the strong similarity between NOMO1, NOMO2 and NOMO3, similar interaction pattern probably occur for the three gene copies.

The protein resides in the endoplasmic reticulum membrane. Component of the multi-pass translocon (MPT) complex that mediates insertion of multi-pass membrane proteins into the lipid bilayer of membranes. The MPT complex takes over after the SEC61 complex: following membrane insertion of the first few transmembrane segments of proteins by the SEC61 complex, the MPT complex occludes the lateral gate of the SEC61 complex to promote insertion of subsequent transmembrane regions. In Homo sapiens (Human), this protein is BOS complex subunit NOMO3 (NOMO3).